The primary structure comprises 432 residues: Adenylosuccinate synthetase (432 aa).

GTP contacts are provided by residues 13 to 19 (GDEGKGK) and 41 to 43 (GHT). The Proton acceptor role is filled by aspartate 14. Mg(2+) is bound by residues aspartate 14 and glycine 41. IMP is bound by residues 14 to 17 (DEGK), 39 to 42 (NAGH), threonine 130, arginine 144, glutamine 225, threonine 240, and arginine 304. Residue histidine 42 is the Proton donor of the active site. 300 to 306 (ATTGRRR) is a substrate binding site. Residues arginine 306, 332–334 (KLD), and 415–417 (STG) contribute to the GTP site.

The protein belongs to the adenylosuccinate synthetase family. As to quaternary structure, homodimer. Mg(2+) is required as a cofactor.

Its subcellular location is the cytoplasm. The enzyme catalyses IMP + L-aspartate + GTP = N(6)-(1,2-dicarboxyethyl)-AMP + GDP + phosphate + 2 H(+). It participates in purine metabolism; AMP biosynthesis via de novo pathway; AMP from IMP: step 1/2. Its function is as follows. Plays an important role in the de novo pathway of purine nucleotide biosynthesis. Catalyzes the first committed step in the biosynthesis of AMP from IMP. The protein is Adenylosuccinate synthetase of Klebsiella pneumoniae (strain 342).